The chain runs to 292 residues: Probable ABC transporter permease protein PH1215 (292 aa).

A run of 6 helical transmembrane segments spans residues 10-30 (IILF…FAVV), 72-92 (LLLI…LAIL), 106-126 (IYVL…AWMY), 160-180 (IIIA…LAGI), 215-235 (LSAF…IWVL), and 261-281 (FAYG…VVLP). The ABC transmembrane type-1 domain maps to 68–284 (LRNNLLLILL…ALVVVLPYLY (217 aa)).

The protein belongs to the binding-protein-dependent transport system permease family. MalFG subfamily.

Its subcellular location is the cell membrane. Functionally, probably part of a binding-protein-dependent transport system PH1214/15/16. Probably responsible for the translocation of the substrate across the membrane. The polypeptide is Probable ABC transporter permease protein PH1215 (Pyrococcus horikoshii (strain ATCC 700860 / DSM 12428 / JCM 9974 / NBRC 100139 / OT-3)).